A 337-amino-acid polypeptide reads, in one-letter code: MKIYYEHDADLGFILGKKVAVLGFGSQGHAHALNLKDSGVDVRVGLRKGSRSWEKAEAAGLRVLPVAEAVREADVVMVLLPDEKQAQVYREEVEPNLKEGGALAFAHGFNVHFGQIKPRKDLDVWMVAPKGPGHLVRSEYQKGSGVPALVAVHQDASGSAFPTALAYAKAIGAARAGVIATTFKDETETDLFGEQAVLCGGLTRLIRAGFETLVEAGYPPEMAYFETVHEVKLIVDLIYEAGLKGMRYSISNTAEYGDYTRGDLAVPLEETKRRMREILRQIQSGEFAREWMLENQVGSPVLEANRKRWAAHPIEEVGSRLRAMMPFLKARVMEEVG.

Residues 1–181 enclose the KARI N-terminal Rossmann domain; sequence MKIYYEHDAD…GAARAGVIAT (181 aa). NADP(+) contacts are provided by residues 24–27, arginine 47, serine 50, serine 52, and 82–85; these read FGSQ and DEKQ. Histidine 107 is a catalytic residue. Glycine 133 lines the NADP(+) pocket. One can recognise a KARI C-terminal knotted domain in the interval 182-328; the sequence is TFKDETETDL…SRLRAMMPFL (147 aa). The Mg(2+) site is built by aspartate 190, glutamate 194, glutamate 226, and glutamate 230. Residue serine 251 coordinates substrate.

This sequence belongs to the ketol-acid reductoisomerase family. The cofactor is Mg(2+).

It carries out the reaction (2R)-2,3-dihydroxy-3-methylbutanoate + NADP(+) = (2S)-2-acetolactate + NADPH + H(+). The catalysed reaction is (2R,3R)-2,3-dihydroxy-3-methylpentanoate + NADP(+) = (S)-2-ethyl-2-hydroxy-3-oxobutanoate + NADPH + H(+). It functions in the pathway amino-acid biosynthesis; L-isoleucine biosynthesis; L-isoleucine from 2-oxobutanoate: step 2/4. Its pathway is amino-acid biosynthesis; L-valine biosynthesis; L-valine from pyruvate: step 2/4. Involved in the biosynthesis of branched-chain amino acids (BCAA). Catalyzes an alkyl-migration followed by a ketol-acid reduction of (S)-2-acetolactate (S2AL) to yield (R)-2,3-dihydroxy-isovalerate. In the isomerase reaction, S2AL is rearranged via a Mg-dependent methyl migration to produce 3-hydroxy-3-methyl-2-ketobutyrate (HMKB). In the reductase reaction, this 2-ketoacid undergoes a metal-dependent reduction by NADPH to yield (R)-2,3-dihydroxy-isovalerate. The protein is Ketol-acid reductoisomerase (NADP(+)) of Thermus thermophilus (strain ATCC BAA-163 / DSM 7039 / HB27).